Consider the following 334-residue polypeptide: Ornithine carbamoyltransferase (334 aa).

Carbamoyl phosphate contacts are provided by residues 57 to 60, Gln-84, Arg-108, and 135 to 138; these read STRT and HPTQ. L-ornithine-binding positions include Asn-169, Asp-233, and 237–238; that span reads SM. Carbamoyl phosphate is bound by residues 275 to 276 and Arg-320; that span reads CL.

The protein belongs to the aspartate/ornithine carbamoyltransferase superfamily. OTCase family.

The protein localises to the cytoplasm. The catalysed reaction is carbamoyl phosphate + L-ornithine = L-citrulline + phosphate + H(+). It functions in the pathway amino-acid biosynthesis; L-arginine biosynthesis; L-arginine from L-ornithine and carbamoyl phosphate: step 1/3. Reversibly catalyzes the transfer of the carbamoyl group from carbamoyl phosphate (CP) to the N(epsilon) atom of ornithine (ORN) to produce L-citrulline. This is Ornithine carbamoyltransferase from Aeromonas salmonicida (strain A449).